A 194-amino-acid polypeptide reads, in one-letter code: Peptide deformylase (194 aa).

Fe cation is bound by residues cysteine 105 and histidine 147. Glutamate 148 is an active-site residue. Histidine 151 is a binding site for Fe cation.

This sequence belongs to the polypeptide deformylase family. Fe(2+) is required as a cofactor.

It catalyses the reaction N-terminal N-formyl-L-methionyl-[peptide] + H2O = N-terminal L-methionyl-[peptide] + formate. Functionally, removes the formyl group from the N-terminal Met of newly synthesized proteins. Requires at least a dipeptide for an efficient rate of reaction. N-terminal L-methionine is a prerequisite for activity but the enzyme has broad specificity at other positions. This Flavobacterium psychrophilum (strain ATCC 49511 / DSM 21280 / CIP 103535 / JIP02/86) protein is Peptide deformylase.